A 62-amino-acid polypeptide reads, in one-letter code: Conotoxin Lt5.8 (62 aa).

Residues 1 to 19 (MLCLPVFIILLLLVSPAAT) form the signal peptide. A propeptide spanning residues 20–47 (MPVDLEILKAPTKESRKDFEMRIELLRS) is cleaved from the precursor. Gln50 is modified (pyrrolidone carboxylic acid). Gln61 is subject to Glutamine amide.

This sequence belongs to the conotoxin T superfamily. Post-translationally, contains 2 disulfide bonds that can be either 'C1-C3, C2-C4' or 'C1-C4, C2-C3', since these disulfide connectivities have been observed for conotoxins with cysteine framework V (for examples, see AC P0DQQ7 and AC P81755). In terms of tissue distribution, expressed by the venom duct.

It localises to the secreted. This is Conotoxin Lt5.8 from Conus litteratus (Lettered cone).